The following is a 262-amino-acid chain: Putative dimethyl sulfoxide reductase iron-sulfur subunit B (262 aa).

4Fe-4S ferredoxin-type domains follow at residues Tyr4–Phe34, Leu62–Asp93, and Gly94–Asp123. Residues Cys13, Cys16, Cys19, Cys23, Cys71, Cys74, Cys79, Cys83, Cys103, Cys106, Cys109, Cys113, Cys147, Cys150, Cys162, and Cys166 each contribute to the [4Fe-4S] cluster site. The interval Asn209–Asp262 is disordered.

Probable multiprotein complex that likely consists of DmsA, DmsB and DmsC. The cofactor is [4Fe-4S] cluster.

The protein resides in the cell membrane. Its function is as follows. Dimethyl sulfoxide (DMSO) reductase catalyzes the reduction of dimethyl sulfoxide (DMSO) to dimethyl sulfide (DMS) during anaerobic respiration; it can also use trimethylamine N-oxide (TMAO) as terminal electron acceptor. Subunit B is proposed to be involved in electron transfer. This is Putative dimethyl sulfoxide reductase iron-sulfur subunit B (dmsB) from Halobacterium salinarum (strain ATCC 700922 / JCM 11081 / NRC-1) (Halobacterium halobium).